A 184-amino-acid chain; its full sequence is Large ribosomal subunit protein uL5 (184 aa).

The protein belongs to the universal ribosomal protein uL5 family. Part of the 50S ribosomal subunit; part of the 5S rRNA/L5/L18/L25 subcomplex. Contacts the 5S rRNA and the P site tRNA. Forms a bridge to the 30S subunit in the 70S ribosome.

Its function is as follows. This is one of the proteins that bind and probably mediate the attachment of the 5S RNA into the large ribosomal subunit, where it forms part of the central protuberance. In the 70S ribosome it contacts protein S13 of the 30S subunit (bridge B1b), connecting the 2 subunits; this bridge is implicated in subunit movement. Contacts the P site tRNA; the 5S rRNA and some of its associated proteins might help stabilize positioning of ribosome-bound tRNAs. The chain is Large ribosomal subunit protein uL5 from Pelagibacter ubique (strain HTCC1062).